Reading from the N-terminus, the 119-residue chain is MCIILHSCTARLPQAQNLQIELKQDQVQASFKSNEKKNSIFIKLVSEKPMLINRRVESSNLLHSNMGGFLAKKTNSNSKIRNSFTSKCTSLMKQQHARLCIIRLCATMLLRSYTDHDDY.

The segment at Ser-83–Thr-114 is required for DVL/RTFL small polypeptide activity. The helical transmembrane segment at His-96 to Tyr-113 threads the bilayer.

It belongs to the DVL/RTFL small polypeptides family.

The protein resides in the cell membrane. Its function is as follows. Small polypeptide acting as a regulatory molecule which coordinates cellular responses required for differentiation, growth and development, probably by restricting polar cell proliferation in lateral organs and coordinating socket cell recruitment and differentiation at trichome sites. The sequence is that of Small polypeptide DEVIL 24 from Arabidopsis thaliana (Mouse-ear cress).